Consider the following 111-residue polypeptide: Large ribosomal subunit protein uL22 (111 aa).

The protein belongs to the universal ribosomal protein uL22 family. As to quaternary structure, part of the 50S ribosomal subunit.

Its function is as follows. This protein binds specifically to 23S rRNA; its binding is stimulated by other ribosomal proteins, e.g. L4, L17, and L20. It is important during the early stages of 50S assembly. It makes multiple contacts with different domains of the 23S rRNA in the assembled 50S subunit and ribosome. The globular domain of the protein is located near the polypeptide exit tunnel on the outside of the subunit, while an extended beta-hairpin is found that lines the wall of the exit tunnel in the center of the 70S ribosome. The chain is Large ribosomal subunit protein uL22 from Mycoplasma capricolum subsp. capricolum (strain California kid / ATCC 27343 / NCTC 10154).